Consider the following 217-residue polypeptide: Membrane-associated progesterone receptor component 2 (217 aa).

O-linked (Xyl...) (chondroitin sulfate) serine glycosylation is present at Ser-15. Residues Ala-40–Ala-62 form a helical membrane-spanning segment. Phosphoserine is present on residues Ser-84, Ser-98, and Ser-202. The 100-residue stretch at Asp-96–Leu-195 folds into the Cytochrome b5 heme-binding domain. A disordered region spans residues Lys-196–Asp-217. Residues Glu-200–Asp-209 show a composition bias toward acidic residues. The residue at position 204 (Tyr-204) is a Phosphotyrosine. Position 205 is a phosphothreonine (Thr-205).

The protein belongs to the cytochrome b5 family. MAPR subfamily. In terms of assembly, interacts with PGRMC1. Interacts with AAAS.

The protein resides in the membrane. It localises to the nucleus envelope. Its subcellular location is the endoplasmic reticulum. The protein localises to the secreted. Its function is as follows. Required for the maintenance of uterine histoarchitecture and normal female reproductive lifespan. May serve as a universal non-classical progesterone receptor in the uterus. Intracellular heme chaperone required for delivery of labile, or signaling heme, to the nucleus. Plays a role in adipocyte function and systemic glucose homeostasis. In brown fat, which has a high demand for heme, delivery of labile heme in the nucleus regulates the activity of heme-responsive transcriptional repressors such as NR1D1 and BACH1. The protein is Membrane-associated progesterone receptor component 2 of Rattus norvegicus (Rat).